A 138-amino-acid polypeptide reads, in one-letter code: Large ribosomal subunit protein bL17 (138 aa).

The protein belongs to the bacterial ribosomal protein bL17 family. As to quaternary structure, part of the 50S ribosomal subunit. Contacts protein L32.

The chain is Large ribosomal subunit protein bL17 from Dinoroseobacter shibae (strain DSM 16493 / NCIMB 14021 / DFL 12).